Here is a 139-residue protein sequence, read N- to C-terminus: NAD(P) transhydrogenase subunit alpha part 2 (139 aa).

The next 3 helical transmembrane spans lie at Phe49–Ser69, Leu78–Gly98, and Val107–Thr127.

As to quaternary structure, complex of an alpha and a beta chain; in Rhodospirillum, the alpha chain seems to be made of two subunits.

Its subcellular location is the cell inner membrane. The catalysed reaction is NAD(+) + NADPH + H(+)(in) = NADH + NADP(+) + H(+)(out). Functionally, the transhydrogenation between NADH and NADP is coupled to respiration and ATP hydrolysis and functions as a proton pump across the membrane. The polypeptide is NAD(P) transhydrogenase subunit alpha part 2 (pntAB) (Rhodospirillum rubrum (strain ATCC 11170 / ATH 1.1.1 / DSM 467 / LMG 4362 / NCIMB 8255 / S1)).